Reading from the N-terminus, the 243-residue chain is MPTEIAPCDRLIVALDVPSVADAEVMIATLGDAVTFYKIGMELTYAGGLGLAERLAADGKQVFMDLKLHDIPNTVERATRQIAKLGVRFLTVHGFSQSMKAALAGAAGSPLELLAVTVMTSYDDADLATAGYAMTVKELVAHRAVQARDIGIHGLILSPEETQLVRPLVGPDMQLVTPGIRPAGSDVGDQKRIMTPALAIAGGADRLVVGRPVTGAADPAAAAEAIVADIATAVALVGKTNRS.

Substrate is bound by residues aspartate 16, lysine 38, 65-74 (DLKLHDIPNT), threonine 120, arginine 181, glutamine 190, glycine 210, and arginine 211. Lysine 67 acts as the Proton donor in catalysis.

The protein belongs to the OMP decarboxylase family. Type 1 subfamily. As to quaternary structure, homodimer.

The catalysed reaction is orotidine 5'-phosphate + H(+) = UMP + CO2. It functions in the pathway pyrimidine metabolism; UMP biosynthesis via de novo pathway; UMP from orotate: step 2/2. Catalyzes the decarboxylation of orotidine 5'-monophosphate (OMP) to uridine 5'-monophosphate (UMP). The protein is Orotidine 5'-phosphate decarboxylase of Bradyrhizobium sp. (strain ORS 278).